We begin with the raw amino-acid sequence, 288 residues long: HTH-type transcriptional regulator YofA (288 aa).

The 58-residue stretch at 1 to 58 (MESGDLKIFQAVARKGSISKAAESLHYVQSNVTNRIQQLERQLQTQLFYRTNRGMTLT) folds into the HTH lysR-type domain. Residues 18–37 (ISKAAESLHYVQSNVTNRIQ) constitute a DNA-binding region (H-T-H motif).

It belongs to the LysR transcriptional regulatory family.

It is found in the cytoplasm. Its function is as follows. Regulates expression of the cell division protein ftsW, and is essential for cell viability during stationary phase. The chain is HTH-type transcriptional regulator YofA (yofA) from Bacillus velezensis (strain DSM 23117 / BGSC 10A6 / LMG 26770 / FZB42) (Bacillus amyloliquefaciens subsp. plantarum).